We begin with the raw amino-acid sequence, 192 residues long: Ion-translocating oxidoreductase complex subunit A (192 aa).

The next 6 helical transmembrane spans lie at L5–L25, I39–V59, L65–V85, A102–L122, A134–M154, and A171–V191.

It belongs to the NqrDE/RnfAE family. The complex is composed of six subunits: RnfA, RnfB, RnfC, RnfD, RnfE and RnfG.

It is found in the cell inner membrane. Part of a membrane-bound complex that couples electron transfer with translocation of ions across the membrane. This is Ion-translocating oxidoreductase complex subunit A from Shewanella pealeana (strain ATCC 700345 / ANG-SQ1).